Consider the following 116-residue polypeptide: MKKDLLELFDNSFPDRDYTIEIVNAEFTSVCPKTGLPDFGTITIRYVPDKSCIELKSLKYYFLEFRNAGIFYENITNRILDDLVTLLQPRSLSVITEWRARGGITETVSVNYSQTL.

C31 serves as the catalytic Thioimide intermediate. The Proton donor role is filled by D38. Substrate is bound by residues I53 to L55 and Y72 to E73.

The protein belongs to the GTP cyclohydrolase I family. QueF type 1 subfamily.

The protein resides in the cytoplasm. The enzyme catalyses 7-aminomethyl-7-carbaguanine + 2 NADP(+) = 7-cyano-7-deazaguanine + 2 NADPH + 3 H(+). It participates in tRNA modification; tRNA-queuosine biosynthesis. Functionally, catalyzes the NADPH-dependent reduction of 7-cyano-7-deazaguanine (preQ0) to 7-aminomethyl-7-deazaguanine (preQ1). This chain is NADPH-dependent 7-cyano-7-deazaguanine reductase, found in Pelodictyon phaeoclathratiforme (strain DSM 5477 / BU-1).